A 259-amino-acid polypeptide reads, in one-letter code: Type III pantothenate kinase (259 aa).

9–16 serves as a coordination point for ATP; it reads DAGNSRIK. Substrate is bound by residues Tyr93 and 100 to 103; that span reads GSDR. The active-site Proton acceptor is the Asp102. Thr126 lines the ATP pocket. Thr190 is a substrate binding site.

This sequence belongs to the type III pantothenate kinase family. Homodimer. NH4(+) serves as cofactor. It depends on K(+) as a cofactor.

The protein resides in the cytoplasm. It catalyses the reaction (R)-pantothenate + ATP = (R)-4'-phosphopantothenate + ADP + H(+). The protein operates within cofactor biosynthesis; coenzyme A biosynthesis; CoA from (R)-pantothenate: step 1/5. Its function is as follows. Catalyzes the phosphorylation of pantothenate (Pan), the first step in CoA biosynthesis. The sequence is that of Type III pantothenate kinase from Burkholderia pseudomallei (strain K96243).